A 590-amino-acid chain; its full sequence is Cell division protein FtsZ 1 (590 aa).

Residues 24–28 (GGGGN), 111–113 (GTG), E142, R146, and D190 each bind GTP. Disordered regions lie at residues 346–372 (AAVP…QPLQ) and 524–590 (EATN…RQSS). Residues 534-546 (AAAPSAASQQRRP) show a composition bias toward low complexity. Positions 559–576 (GQLDDHGRAAPQMRSHED) are enriched in basic and acidic residues.

This sequence belongs to the FtsZ family. In terms of assembly, homodimer. Polymerizes to form a dynamic ring structure in a strictly GTP-dependent manner. Interacts directly with several other division proteins.

The protein resides in the cytoplasm. In terms of biological role, essential cell division protein that forms a contractile ring structure (Z ring) at the future cell division site. The regulation of the ring assembly controls the timing and the location of cell division. One of the functions of the FtsZ ring is to recruit other cell division proteins to the septum to produce a new cell wall between the dividing cells. Binds GTP and shows GTPase activity. In Rhizobium meliloti (strain 1021) (Ensifer meliloti), this protein is Cell division protein FtsZ 1.